Consider the following 127-residue polypeptide: uncharacterized protein (127 aa).

The interval 1–24 is disordered; that stretch reads PLKTKPIDNNLPHRTGYNQASKQQ.

This is an uncharacterized protein from Homo sapiens (Human).